We begin with the raw amino-acid sequence, 399 residues long: Glutamine synthetase 1, mitochondrial (399 aa).

A mitochondrion-targeting transit peptide spans 1 to 27 (MALRVAGLFLKKELVAPATQQLRLLRT). The GS beta-grasp domain maps to 62 to 143 (VQATYLWIDG…VLCDTYSADG (82 aa)). One can recognise a GS catalytic domain in the interval 150–399 (KRAAFQAAID…AIVRTCLLNE (250 aa)).

Belongs to the glutamine synthetase family. As to quaternary structure, homooctamer.

It is found in the mitochondrion. The catalysed reaction is L-glutamate + NH4(+) + ATP = L-glutamine + ADP + phosphate + H(+). This Drosophila melanogaster (Fruit fly) protein is Glutamine synthetase 1, mitochondrial (Gs1).